The chain runs to 339 residues: Aspartate carbamoyltransferase catalytic subunit (339 aa).

Carbamoyl phosphate is bound by residues Arg-69 and Thr-70. Lys-97 contacts L-aspartate. Carbamoyl phosphate-binding residues include Arg-119, His-149, and Gln-152. Residues Arg-182 and Arg-237 each coordinate L-aspartate. Residues Gly-278 and Pro-279 each coordinate carbamoyl phosphate.

This sequence belongs to the aspartate/ornithine carbamoyltransferase superfamily. ATCase family. In terms of assembly, heterododecamer (2C3:3R2) of six catalytic PyrB chains organized as two trimers (C3), and six regulatory PyrI chains organized as three dimers (R2).

It catalyses the reaction carbamoyl phosphate + L-aspartate = N-carbamoyl-L-aspartate + phosphate + H(+). The protein operates within pyrimidine metabolism; UMP biosynthesis via de novo pathway; (S)-dihydroorotate from bicarbonate: step 2/3. Functionally, catalyzes the condensation of carbamoyl phosphate and aspartate to form carbamoyl aspartate and inorganic phosphate, the committed step in the de novo pyrimidine nucleotide biosynthesis pathway. The chain is Aspartate carbamoyltransferase catalytic subunit from Hydrogenovibrio crunogenus (strain DSM 25203 / XCL-2) (Thiomicrospira crunogena).